The sequence spans 447 residues: Glutamyl-tRNA reductase (447 aa).

Substrate-binding positions include T49–R52, S109, E114–Q116, and Q120. Residue C50 is the Nucleophile of the active site. G189 to G194 provides a ligand contact to NADP(+).

The protein belongs to the glutamyl-tRNA reductase family. As to quaternary structure, homodimer.

It carries out the reaction (S)-4-amino-5-oxopentanoate + tRNA(Glu) + NADP(+) = L-glutamyl-tRNA(Glu) + NADPH + H(+). It functions in the pathway porphyrin-containing compound metabolism; protoporphyrin-IX biosynthesis; 5-aminolevulinate from L-glutamyl-tRNA(Glu): step 1/2. In terms of biological role, catalyzes the NADPH-dependent reduction of glutamyl-tRNA(Glu) to glutamate 1-semialdehyde (GSA). The protein is Glutamyl-tRNA reductase of Mycobacterium sp. (strain JLS).